Reading from the N-terminus, the 262-residue chain is Small ribosomal subunit protein uS3 (262 aa).

Residues 38 to 106 enclose the KH type-2 domain; the sequence is LRKIIAKELE…KVKLNIQEIH (69 aa). A disordered region spans residues 211–262; it reads KGQTQLPQPAVAAARPGLTVEEEERPQRKGGRGGRGANAGAARGGRGGRSRS. Gly residues predominate over residues 243-255; it reads GGRGANAGAARGG.

It belongs to the universal ribosomal protein uS3 family. As to quaternary structure, part of the 30S ribosomal subunit. Forms a tight complex with proteins S10 and S14.

Binds the lower part of the 30S subunit head. Binds mRNA in the 70S ribosome, positioning it for translation. This is Small ribosomal subunit protein uS3 from Roseiflexus sp. (strain RS-1).